A 96-amino-acid polypeptide reads, in one-letter code: Aspartyl/glutamyl-tRNA(Asn/Gln) amidotransferase subunit C (96 aa).

This sequence belongs to the GatC family. As to quaternary structure, heterotrimer of A, B and C subunits.

The enzyme catalyses L-glutamyl-tRNA(Gln) + L-glutamine + ATP + H2O = L-glutaminyl-tRNA(Gln) + L-glutamate + ADP + phosphate + H(+). The catalysed reaction is L-aspartyl-tRNA(Asn) + L-glutamine + ATP + H2O = L-asparaginyl-tRNA(Asn) + L-glutamate + ADP + phosphate + 2 H(+). In terms of biological role, allows the formation of correctly charged Asn-tRNA(Asn) or Gln-tRNA(Gln) through the transamidation of misacylated Asp-tRNA(Asn) or Glu-tRNA(Gln) in organisms which lack either or both of asparaginyl-tRNA or glutaminyl-tRNA synthetases. The reaction takes place in the presence of glutamine and ATP through an activated phospho-Asp-tRNA(Asn) or phospho-Glu-tRNA(Gln). This Bacillus velezensis (strain DSM 23117 / BGSC 10A6 / LMG 26770 / FZB42) (Bacillus amyloliquefaciens subsp. plantarum) protein is Aspartyl/glutamyl-tRNA(Asn/Gln) amidotransferase subunit C.